A 278-amino-acid polypeptide reads, in one-letter code: Phosphatidylglycerol--prolipoprotein diacylglyceryl transferase (278 aa).

4 helical membrane-spanning segments follow: residues 12 to 32 (FGPL…LIGL), 44 to 64 (LENG…VIGA), 86 to 106 (IWEG…TLIL), and 113 to 133 (QPFL…QAIG). Residue R134 coordinates a 1,2-diacyl-sn-glycero-3-phospho-(1'-sn-glycerol). A run of 3 helical transmembrane segments spans residues 173 to 193 (PTFL…LVLF), 203 to 223 (FPAG…RIWI), and 246 to 266 (IAQL…WWLK).

Belongs to the Lgt family.

It localises to the cell inner membrane. It catalyses the reaction L-cysteinyl-[prolipoprotein] + a 1,2-diacyl-sn-glycero-3-phospho-(1'-sn-glycerol) = an S-1,2-diacyl-sn-glyceryl-L-cysteinyl-[prolipoprotein] + sn-glycerol 1-phosphate + H(+). It functions in the pathway protein modification; lipoprotein biosynthesis (diacylglyceryl transfer). Catalyzes the transfer of the diacylglyceryl group from phosphatidylglycerol to the sulfhydryl group of the N-terminal cysteine of a prolipoprotein, the first step in the formation of mature lipoproteins. This chain is Phosphatidylglycerol--prolipoprotein diacylglyceryl transferase, found in Parasynechococcus marenigrum (strain WH8102).